Here is a 1319-residue protein sequence, read N- to C-terminus: Chitin-binding domain protein cbd-1 (1319 aa).

The N-terminal stretch at 1–19 is a signal peptide; it reads MGPQLATVSLLLLTFFSNS. 3 consecutive Chitin-binding type-2 domains span residues 28–83, 96–141, and 190–236; these read ATEC…ECRV, EFDC…TQDC, and DFDC…QSCD. 3 cysteine pairs are disulfide-bonded: Cys-61/Cys-72, Cys-128/Cys-141, and Cys-222/Cys-235. Residues 250–271 form a disordered region; it reads YSTSTITTPQEDDSEYSSTTSA. Residues 304–357 enclose the Chitin-binding type-2 4 domain; sequence PFVCQEGQVNSFGMCSSRFNRCQNNSVRSKQCPVNTLFESSLVMCVFDLPQCQP. Residue Asn-327 is glycosylated (N-linked (GlcNAc...) asparagine). An intrachain disulfide couples Cys-335 to Cys-348. The interval 504 to 524 is disordered; sequence KNRHSKKQLGPHEDPDGYDDE. Basic and acidic residues predominate over residues 513–524; sequence GPHEDPDGYDDE. Residues 566-614 form the Chitin-binding type-2 5 domain; it reads NKDCQQYTTPTFLTFGDCFDQFIFCSGNGINRMAACPIGETFDKTLRSC. An intrachain disulfide couples Cys-601 to Cys-614. The interval 649-682 is disordered; that stretch reads VTTQSTWNDQPSTTQAPNSYESYTTQYSSNDVPS. Chitin-binding type-2 domains lie at 689–745, 782–838, and 883–942; these read GDRC…ECGS, GDRC…KCQT, and VDTC…ACDE. Cysteines 721 and 734 form a disulfide. The interval 742 to 764 is disordered; it reads ECGSQGSTSSPVITTPGQDQSSN. The span at 745 to 764 shows a compositional bias: polar residues; sequence SQGSTSSPVITTPGQDQSSN. 2 cysteine pairs are disulfide-bonded: Cys-814–Cys-827 and Cys-916–Cys-929. Over residues 984–995 the composition is skewed to polar residues; it reads TGSTKYSTTDSG. Residues 984 to 1031 form a disordered region; that stretch reads TGSTKYSTTDSGEYTIPYGDETTSTRSYDRADNDSEDEEEDDVEHDQK. A glycan (N-linked (GlcNAc...) asparagine) is linked at Asn-1016. Over residues 1017–1027 the composition is skewed to acidic residues; sequence DSEDEEEDDVE. Chitin-binding type-2 domains are found at residues 1029-1081, 1105-1163, 1179-1237, and 1242-1298; these read DQKC…GCGK, EGRC…ACTV, SAFC…GCEN, and NGEC…SCSG. 4 cysteine pairs are disulfide-bonded: Cys-1060–Cys-1073, Cys-1139–Cys-1152, Cys-1213–Cys-1226, and Cys-1274–Cys-1287. Residues 1297-1312 show a composition bias toward low complexity; sequence SGQASDSNSSYGSSTY. Residues 1297 to 1319 form a disordered region; the sequence is SGQASDSNSSYGSSTYNDDKSGY. Asn-1304 carries an N-linked (GlcNAc...) asparagine glycan.

Its subcellular location is the secreted. It localises to the extracellular space. The protein localises to the extracellular matrix. Functionally, in unfertilized oocytes, maintains egg-1 and egg-2 at the plasma membrane together with chitin synthase chs-1 and kinase mbk-2. Essential for the formation of a continuous and cohesive chitin layer following fertilization. This chain is Chitin-binding domain protein cbd-1, found in Caenorhabditis elegans.